Here is a 592-residue protein sequence, read N- to C-terminus: Ferric-chelate reductase 1 (592 aa).

A helical transmembrane segment spans residues 2–22 (AVSGFTLGTCILLLHISYVAN). A Reelin domain is found at 13–179 (LLLHISYVAN…FTTPKATVVP (167 aa)). N-linked (GlcNAc...) asparagine glycans are attached at residues Asn138, Asn308, and Asn321. One can recognise a DOMON domain in the interval 216–331 (EASCVFLSFT…TSYYIFLADG (116 aa)). Residues 335–534 (DGRIYKHSQQ…VGTEVVLEVH (200 aa)) form the Cytochrome b561 domain. The helical transmembrane segment at 372 to 392 (VHGALMFVAWMTTVSIGVLVA) threads the bilayer. His373 and His414 together coordinate heme b. Helical transmembrane passes span 415-435 (RMLM…PFIY) and 446-466 (HPYL…LAVF). Residues His446 and His482 each coordinate heme b. The next 3 helical transmembrane spans lie at 491–511 (IIAV…LPDS), 515–535 (YAMT…EVHA), and 569–589 (AVLA…LSAI).

The protein belongs to the FRRS1 family. Heme b is required as a cofactor.

It is found in the membrane. Functionally, ferric-chelate reductases reduce Fe(3+) to Fe(2+) before its transport from the endosome to the cytoplasm. This chain is Ferric-chelate reductase 1 (FRRS1), found in Homo sapiens (Human).